The following is a 144-amino-acid chain: UPF0102 protein BURPS1106A_3900 (144 aa).

A disordered region spans residues 1–28 (MCHAREASPGTGEPEAAPRDNFPRAAGS).

It belongs to the UPF0102 family.

The sequence is that of UPF0102 protein BURPS1106A_3900 from Burkholderia pseudomallei (strain 1106a).